Consider the following 179-residue polypeptide: ATP synthase subunit delta (179 aa).

This sequence belongs to the ATPase delta chain family. F-type ATPases have 2 components, F(1) - the catalytic core - and F(0) - the membrane proton channel. F(1) has five subunits: alpha(3), beta(3), gamma(1), delta(1), epsilon(1). F(0) has three main subunits: a(1), b(2) and c(10-14). The alpha and beta chains form an alternating ring which encloses part of the gamma chain. F(1) is attached to F(0) by a central stalk formed by the gamma and epsilon chains, while a peripheral stalk is formed by the delta and b chains.

It localises to the cell membrane. F(1)F(0) ATP synthase produces ATP from ADP in the presence of a proton or sodium gradient. F-type ATPases consist of two structural domains, F(1) containing the extramembraneous catalytic core and F(0) containing the membrane proton channel, linked together by a central stalk and a peripheral stalk. During catalysis, ATP synthesis in the catalytic domain of F(1) is coupled via a rotary mechanism of the central stalk subunits to proton translocation. Its function is as follows. This protein is part of the stalk that links CF(0) to CF(1). It either transmits conformational changes from CF(0) to CF(1) or is implicated in proton conduction. In Clostridium botulinum (strain Okra / Type B1), this protein is ATP synthase subunit delta.